The following is a 201-amino-acid chain: MINKAILGGTFDPIHNAHINVAYEALERFNLEEVIFIPAGNPPHKIKLKKTPAHIRYEMVKLAIEKETRFSISDFEIKSKGLSYTYRTLKHFKEKEPETNWYFITGEDCLSYLEHWKYIDEIFNICNFVIFSREGFKEKEEIIKKKKSILLKYGKEILFMDASILDISSTKIRNRIKEGKEVSFYMPDKVYKFILQNNLYK.

It belongs to the NadD family.

It catalyses the reaction nicotinate beta-D-ribonucleotide + ATP + H(+) = deamido-NAD(+) + diphosphate. The protein operates within cofactor biosynthesis; NAD(+) biosynthesis; deamido-NAD(+) from nicotinate D-ribonucleotide: step 1/1. Catalyzes the reversible adenylation of nicotinate mononucleotide (NaMN) to nicotinic acid adenine dinucleotide (NaAD). The polypeptide is Probable nicotinate-nucleotide adenylyltransferase (Clostridium botulinum (strain Kyoto / Type A2)).